The following is a 235-amino-acid chain: Purine nucleoside phosphorylase DeoD-type (235 aa).

Histidine 4 provides a ligand contact to a purine D-ribonucleoside. Residues glycine 20, arginine 24, arginine 43, and 87–90 (RVGT) contribute to the phosphate site. Residues glutamate 162, 179–181 (EME), and 203–204 (SD) each bind a purine D-ribonucleoside. Catalysis depends on aspartate 204, which acts as the Proton donor.

It belongs to the PNP/UDP phosphorylase family. As to quaternary structure, homohexamer; trimer of homodimers.

The enzyme catalyses a purine D-ribonucleoside + phosphate = a purine nucleobase + alpha-D-ribose 1-phosphate. The catalysed reaction is a purine 2'-deoxy-D-ribonucleoside + phosphate = a purine nucleobase + 2-deoxy-alpha-D-ribose 1-phosphate. Its function is as follows. Catalyzes the reversible phosphorolytic breakdown of the N-glycosidic bond in the beta-(deoxy)ribonucleoside molecules, with the formation of the corresponding free purine bases and pentose-1-phosphate. This is Purine nucleoside phosphorylase DeoD-type from Bacillus cytotoxicus (strain DSM 22905 / CIP 110041 / 391-98 / NVH 391-98).